Consider the following 772-residue polypeptide: MALATLDWMSKDAERLAQCNHDHPQAVLGPQQLEDGRWVVRVWMPEASRVVLLHQGHEHALENPHHAWIFEGELSSNPGSQYRLRVERAGITHEQHDPYAFRQEWMGAMDRHLFAEGNHHHIWQRMGAHPHLQDGVAGVQFCLWAPNARSVSVIGDCTNWDGRHLPMQQRIGGIWELFVPGLGAGAHYKYEIHTQQGHCYEKADPYGFQHEVRPAQASVVASLKGYQWGDDAWLKQRDNRNPLEQPVSVYEMHMGSWMHGSWDEPYIEADGTPRAPVPAADLKPGARLLTYPELADRVIPYVKARGFTHIELMPMAEHPFDGSWGYQVTGFYAPTSRFGTLDEFRAFVDRCHAEGIGVILDWVPGHFPKDAHGLAFFDGSHLYEHGDPRIGEHKEWGTLIFNYSRNEVRNFLVANLVFWFEELHIDGIRVDAVASMLYRDYLRPDGEWIANEHGGRENLEAVRFLQQANSVLFHYFPGALSIAEESTTWPLVTMPTSMGGLGFNLKWNMGWMHDMLDYFELDHWFRQFHQNNITFSIWYAHTENFMLALSHDEVVHGKSHLLHKMPGSDELKFANVRALLTYMWTHPGKKTIFMGMEFAQRGEWNVWGDLEWDKLQFPEHQGVVNLVDDLNALYKSEPALWRNDFDSFGFQWIDCDDTNHSVVSFMRRDEKEGNWVVVVCNFTPEGHGNYRIGVPVDGFYTELFNSDGARYGGSNQGNLGGKFSDDWGMHSYGQSLDLCLPPLTVMVFKHDPNRQREAAKDEAAAKLGGSLG.

The active-site Nucleophile is Asp431. Glu484 (proton donor) is an active-site residue.

The protein belongs to the glycosyl hydrolase 13 family. GlgB subfamily. As to quaternary structure, monomer.

The catalysed reaction is Transfers a segment of a (1-&gt;4)-alpha-D-glucan chain to a primary hydroxy group in a similar glucan chain.. The protein operates within glycan biosynthesis; glycogen biosynthesis. Its function is as follows. Catalyzes the formation of the alpha-1,6-glucosidic linkages in glycogen by scission of a 1,4-alpha-linked oligosaccharide from growing alpha-1,4-glucan chains and the subsequent attachment of the oligosaccharide to the alpha-1,6 position. This chain is 1,4-alpha-glucan branching enzyme GlgB, found in Synechococcus sp. (strain RCC307).